Consider the following 285-residue polypeptide: RNA 5'-monophosphate methyltransferase (285 aa).

Residues 1 to 28 (MAATQELSKGGVEEAVEEDDPAALKPGA) are disordered. Residues Arg-46, Asn-77, Asp-111, 136–137 (DI), and Met-165 each bind S-adenosyl-L-methionine. The Bin3-type SAM domain maps to 53–275 (ELLRQLFPPE…KHTEETQAIP (223 aa)).

The protein belongs to the methyltransferase superfamily. Interacts with DICER1; the interaction may be mediated by RNA.

The protein resides in the cytoplasm. The enzyme catalyses a 5'-end 5'-phospho-ribonucleoside-RNA + S-adenosyl-L-methionine = a 5'-end (5'-methylphospho)-ribonucleoside-RNA + S-adenosyl-L-homocysteine. It carries out the reaction a 5'-end 5'-phospho-ribonucleoside-RNA + 2 S-adenosyl-L-methionine = a 5'-end (5'-bismethylphospho)-ribonucleoside-RNA + 2 S-adenosyl-L-homocysteine. Functionally, O-methyltransferase that specifically monomethylates 5'-monophosphate of cytoplasmic histidyl tRNA (tRNA(His)), acting as a capping enzyme by protecting tRNA(His) from cleavage by DICER1. Also able, with less efficiently, to methylate the 5' monophosphate of a subset of pre-miRNAs, acting as a negative regulator of miRNA processing. The 5' monophosphate of pre-miRNAs is recognized by DICER1 and is required for pre-miRNAs processing: methylation at this position reduces the processing of pre-miRNAs by DICER1. Was also reported to mediate dimethylation of pre-miR-145; however dimethylation cannot be reproduced by another group which observes a monomethylation of pre-miR-145. This Rattus norvegicus (Rat) protein is RNA 5'-monophosphate methyltransferase.